Here is a 154-residue protein sequence, read N- to C-terminus: Superoxide dismutase [Cu-Zn] (154 aa).

Cu cation contacts are provided by H47, H49, and H64. C58 and C147 are oxidised to a cystine. The disordered stretch occupies residues 62–89 (GPHFNPFKKNHGGPTDSERHVGDLGNVK). H64, H72, H81, and D84 together coordinate Zn(2+). Residue H121 coordinates Cu cation. Position 144 (R144) interacts with substrate.

Belongs to the Cu-Zn superoxide dismutase family. Homodimer. The cofactor is Cu cation. Zn(2+) serves as cofactor.

The protein localises to the cytoplasm. It catalyses the reaction 2 superoxide + 2 H(+) = H2O2 + O2. Destroys radicals which are normally produced within the cells and which are toxic to biological systems. This is Superoxide dismutase [Cu-Zn] (SOD1) from Yarrowia lipolytica (strain CLIB 122 / E 150) (Yeast).